The following is a 300-amino-acid chain: Protoheme IX farnesyltransferase (300 aa).

A run of 9 helical transmembrane segments spans residues 24–44 (VTQL…PGMV), 48–68 (VLLG…AINC), 94–114 (LQIL…LYTF), 118–138 (LTIW…TLLL), 146–166 (IVIG…AVTG), 172–192 (AWIL…VLAL), 217–237 (LHIL…FISG), 239–259 (SGAV…AYAW), and 278–298 (IVYL…RPVI).

The protein belongs to the UbiA prenyltransferase family. Protoheme IX farnesyltransferase subfamily.

Its subcellular location is the cell inner membrane. The enzyme catalyses heme b + (2E,6E)-farnesyl diphosphate + H2O = Fe(II)-heme o + diphosphate. Its pathway is porphyrin-containing compound metabolism; heme O biosynthesis; heme O from protoheme: step 1/1. Converts heme B (protoheme IX) to heme O by substitution of the vinyl group on carbon 2 of heme B porphyrin ring with a hydroxyethyl farnesyl side group. In Burkholderia mallei (strain NCTC 10247), this protein is Protoheme IX farnesyltransferase.